An 891-amino-acid chain; its full sequence is DNA mismatch repair protein MutS (891 aa).

Residue 632–639 (GPNMAGKS) coordinates ATP.

It belongs to the DNA mismatch repair MutS family.

Its function is as follows. This protein is involved in the repair of mismatches in DNA. It is possible that it carries out the mismatch recognition step. This protein has a weak ATPase activity. The sequence is that of DNA mismatch repair protein MutS from Rhodopirellula baltica (strain DSM 10527 / NCIMB 13988 / SH1).